Here is an 834-residue protein sequence, read N- to C-terminus: Translation factor GUF1 homolog, mitochondrial (834 aa).

The transit peptide at 1–66 (MKLCGVRGSG…RPLLAEPRRY (66 aa)) directs the protein to the mitochondrion. The region spanning 129–314 (ACIRNVSVVA…QIIDKVPPPR (186 aa)) is the tr-type G domain. GTP is bound by residues 138–145 (AHVDHGKT), 205–209 (DTPGH), and 259–262 (TKMD). Positions 475 to 507 (ATGPPETASRTKPATAAETASSDDASGSSGSSV) are disordered. The segment covering 488-507 (ATAAETASSDDASGSSGSSV) has biased composition (low complexity).

This sequence belongs to the TRAFAC class translation factor GTPase superfamily. Classic translation factor GTPase family. LepA subfamily.

The protein resides in the mitochondrion inner membrane. The enzyme catalyses GTP + H2O = GDP + phosphate + H(+). In terms of biological role, promotes mitochondrial protein synthesis. May act as a fidelity factor of the translation reaction, by catalyzing a one-codon backward translocation of tRNAs on improperly translocated ribosomes. Binds to mitochondrial ribosomes in a GTP-dependent manner. This chain is Translation factor GUF1 homolog, mitochondrial, found in Leishmania major.